We begin with the raw amino-acid sequence, 205 residues long: Glycerol-3-phosphate acyltransferase (205 aa).

5 helical membrane-spanning segments follow: residues 4–24 (IAPG…AILV), 80–100 (PFWL…PVFF), 107–127 (GVAT…GVMA), 130–150 (WLLT…SALI), and 155–175 (VWWF…LILL).

It belongs to the PlsY family. In terms of assembly, probably interacts with PlsX.

Its subcellular location is the cell inner membrane. It catalyses the reaction an acyl phosphate + sn-glycerol 3-phosphate = a 1-acyl-sn-glycero-3-phosphate + phosphate. It participates in lipid metabolism; phospholipid metabolism. Functionally, catalyzes the transfer of an acyl group from acyl-phosphate (acyl-PO(4)) to glycerol-3-phosphate (G3P) to form lysophosphatidic acid (LPA). This enzyme utilizes acyl-phosphate as fatty acyl donor, but not acyl-CoA or acyl-ACP. The chain is Glycerol-3-phosphate acyltransferase from Klebsiella pneumoniae (strain 342).